We begin with the raw amino-acid sequence, 270 residues long: MGKGLLGKRVAIGGSRKTEEISTIIEKQGGIPVIRPLQGTVYLAEKQVEPDLRTFAEEKADWVIFTTGIGLETLVDMAEKIGLKDEFLQAIRQAKAACRGYKTLSALKKLGITPEASDEDGTTRGLIRSLEPHDFSGKTVMVQLHGEKAPALMAFLEEKGASVLPILPYQHIPPEEETVERLCRELMNDEVDAVCFTTAIQVRSLFDFAKGRGYINEVKKVFEERAIAAAVGKVTAEALREEGITRLLAPEIERMGAMIVELAKYYEEKE.

This is an uncharacterized protein from Bacillus subtilis (strain 168).